A 20-amino-acid chain; its full sequence is TQSTGTSQTIAVGLWGGPDN.

Residues 1 to 10 are compositionally biased toward polar residues; that stretch reads TQSTGTSQTI. Positions 1 to 20 are disordered; sequence TQSTGTSQTIAVGLWGGPDN.

It belongs to the jacalin lectin family. As to quaternary structure, tetramer of four alpha chains associated with two or four beta chains.

Alpha-methyl-D-mannoside and D-mannose specific lectin. Binds IgA. The sequence is that of Agglutinin beta-2 chain isoform 1 from Morus nigra (Black mulberry).